A 62-amino-acid polypeptide reads, in one-letter code: Large ribosomal subunit protein bL28 (62 aa).

It belongs to the bacterial ribosomal protein bL28 family.

The protein is Large ribosomal subunit protein bL28 of Helicobacter hepaticus (strain ATCC 51449 / 3B1).